Here is a 265-residue protein sequence, read N- to C-terminus: uncharacterized protein (265 aa).

2 disordered regions span residues 62–94 and 118–149; these read RNKKKEEKKGKGLMTARGGNRRDTETSQQALGK and MVPGSYIKDGPKKSDTDIKDAVDPESTQRPNP. The span at 126–139 shows a compositional bias: basic and acidic residues; it reads DGPKKSDTDIKDAV.

This is an uncharacterized protein from Homo sapiens (Human).